The following is a 172-amino-acid chain: MAKKVAIILADEFEDIELTSPKEALENAGFETEVIGDTANHEVVGKHGEKVTVDVSIADAKPENYDALLIPGGFSPDHLRGDEEGRYGTFAKYFTKNDVPTFAICHGPLVLVDTDDLKGRTITGVINVRKDLSNAGANVVDESVVVDNNIVTSRVPDDLDDFNREIVKKLEA.

A PfpI endopeptidase domain is found at 3-171 (KKVAIILADE…FNREIVKKLE (169 aa)).

This sequence belongs to the peptidase C56 family.

This is an uncharacterized protein from Staphylococcus epidermidis (strain ATCC 35984 / DSM 28319 / BCRC 17069 / CCUG 31568 / BM 3577 / RP62A).